Reading from the N-terminus, the 353-residue chain is Photosystem II protein D1 (353 aa).

Thr2 bears the N-acetylthreonine mark. Thr2 carries the post-translational modification Phosphothreonine. A run of 3 helical transmembrane segments spans residues Tyr29–Ser46, His118–Leu133, and Trp142–Ala156. His118 provides a ligand contact to chlorophyll a. Residue Tyr126 participates in pheophytin a binding. 2 residues coordinate [CaMn4O5] cluster: Asp170 and Glu189. The helical transmembrane segment at Phe197–Leu218 threads the bilayer. His198 serves as a coordination point for chlorophyll a. A quinone contacts are provided by residues His215 and Ser264 to Phe265. Residue His215 coordinates Fe cation. His272 contributes to the Fe cation binding site. Residues Phe274–Leu288 traverse the membrane as a helical segment. Residues His332, Glu333, Asp342, and Ala344 each coordinate [CaMn4O5] cluster. Positions Ser345–Ala353 are excised as a propeptide.

The protein belongs to the reaction center PufL/M/PsbA/D family. PSII is composed of 1 copy each of membrane proteins PsbA, PsbB, PsbC, PsbD, PsbE, PsbF, PsbH, PsbI, PsbJ, PsbK, PsbL, PsbM, PsbT, PsbX, PsbY, PsbZ, Psb30/Ycf12, at least 3 peripheral proteins of the oxygen-evolving complex and a large number of cofactors. It forms dimeric complexes. The D1/D2 heterodimer binds P680, chlorophylls that are the primary electron donor of PSII, and subsequent electron acceptors. It shares a non-heme iron and each subunit binds pheophytin, quinone, additional chlorophylls, carotenoids and lipids. D1 provides most of the ligands for the Mn4-Ca-O5 cluster of the oxygen-evolving complex (OEC). There is also a Cl(-1) ion associated with D1 and D2, which is required for oxygen evolution. The PSII complex binds additional chlorophylls, carotenoids and specific lipids. serves as cofactor. Post-translationally, tyr-161 forms a radical intermediate that is referred to as redox-active TyrZ, YZ or Y-Z. C-terminally processed by CTPA; processing is essential to allow assembly of the oxygen-evolving complex and thus photosynthetic growth.

It is found in the plastid. It localises to the chloroplast thylakoid membrane. It carries out the reaction 2 a plastoquinone + 4 hnu + 2 H2O = 2 a plastoquinol + O2. Functionally, photosystem II (PSII) is a light-driven water:plastoquinone oxidoreductase that uses light energy to abstract electrons from H(2)O, generating O(2) and a proton gradient subsequently used for ATP formation. It consists of a core antenna complex that captures photons, and an electron transfer chain that converts photonic excitation into a charge separation. The D1/D2 (PsbA/PsbD) reaction center heterodimer binds P680, the primary electron donor of PSII as well as several subsequent electron acceptors. The chain is Photosystem II protein D1 from Oltmannsiellopsis viridis (Marine flagellate).